Consider the following 485-residue polypeptide: Adenosylhomocysteinase (485 aa).

Threonine 60, aspartate 146, and glutamate 208 together coordinate substrate. 209–211 (TTT) is a binding site for NAD(+). Substrate is bound by residues lysine 238 and aspartate 242. NAD(+) is bound by residues asparagine 243, 272–277 (GYGDVG), glutamate 295, asparagine 330, 351–353 (IGH), and asparagine 399.

Belongs to the adenosylhomocysteinase family. The cofactor is NAD(+).

The protein localises to the cytoplasm. The catalysed reaction is S-adenosyl-L-homocysteine + H2O = L-homocysteine + adenosine. It functions in the pathway amino-acid biosynthesis; L-homocysteine biosynthesis; L-homocysteine from S-adenosyl-L-homocysteine: step 1/1. In terms of biological role, may play a key role in the regulation of the intracellular concentration of adenosylhomocysteine. This is Adenosylhomocysteinase from Streptomyces avermitilis (strain ATCC 31267 / DSM 46492 / JCM 5070 / NBRC 14893 / NCIMB 12804 / NRRL 8165 / MA-4680).